Consider the following 792-residue polypeptide: uncharacterized protein (792 aa).

25 repeat units span residues 91–102 (NSSTNATTTASI), 103–114 (NVRTSATTTASI), 115–126 (NVRTSATTTEST), 127–138 (NSNTNATTTEST), 139–150 (NSSTNATTTASI), 151–162 (NVRTSATTTEST), 163–174 (NSSTNATTTASI), 175–186 (NVRTSATTTEST), 187–198 (NSSTNATTTASI), 199–210 (NVRTSATTTEST), 211–222 (NSNTNASTNATT), 223–234 (NSSTNATTTAST), 235–246 (NVRTSATTNATT), 247–258 (NSSTNATTTAST), 259–270 (NVRTSATTTAST), 271–282 (NVRTSATTTASI), 283–294 (NVRTSATTTESI), 295–306 (NSSTNATTTEST), 307–318 (NSNTSATTTEST), 319–330 (DSNTNATTTASI), 331–342 (NVRTSATTTEST), 343–354 (NSNTSATTTEST), 355–366 (DSNTSATTTAST), 367–378 (NSSTNATTTAST), and 379–390 (NSSTNATTTEST). Residues 91–390 (NSSTNATTTA…STNATTTEST (300 aa)) are 25 X 12 AA tandem repeat of N-[SV]-[RS]-T-[NS]-A-T-T-T-[AE]-[ST]-[IT]. The segment at 113-417 (SINVRTSATT…RFHPVTDINK (305 aa)) is disordered. Residues 118–393 (TSATTTESTN…ATTTESTNAS (276 aa)) are compositionally biased toward low complexity. Positions 394-417 (AKEDANKDGNAEDNRFHPVTDINK) are enriched in basic and acidic residues.

This is an uncharacterized protein from Saccharomyces cerevisiae (strain ATCC 204508 / S288c) (Baker's yeast).